The sequence spans 481 residues: Squalene epoxidase erg1 (481 aa).

Residues 28 to 48 traverse the membrane as a helical segment; it reads HADVVIIGAGVLGCALAVALG. FAD-binding positions include 38–39, 58–59, arginine 66, and arginine 138; these read VL and EA. Asparagine 146 carries an N-linked (GlcNAc...) asparagine glycan. Residues aspartate 319 and methionine 332 each contribute to the FAD site. Helical transmembrane passes span 425 to 445 and 452 to 472; these read KPSVLFVHFFSVALLSLWVLL and LFPVALFKCIMTFWTACVVIF.

Belongs to the squalene monooxygenase family. It depends on FAD as a cofactor.

The protein localises to the endoplasmic reticulum membrane. It is found in the microsome membrane. It carries out the reaction squalene + reduced [NADPH--hemoprotein reductase] + O2 = (S)-2,3-epoxysqualene + oxidized [NADPH--hemoprotein reductase] + H2O + H(+). Its pathway is steroid metabolism; ergosterol biosynthesis. In terms of biological role, squalene epoxidase; part of the third module of ergosterol biosynthesis pathway that includes the late steps of the pathway. Erg1 catalyzes the epoxidation of squalene into 2,3-epoxysqualene. The third module or late pathway involves the ergosterol synthesis itself through consecutive reactions that mainly occur in the endoplasmic reticulum (ER) membrane. Firstly, the squalene synthase erg9 catalyzes the condensation of 2 farnesyl pyrophosphate moieties to form squalene, which is the precursor of all steroids. Squalene synthase is crucial for balancing the incorporation of farnesyl diphosphate (FPP) into sterol and nonsterol isoprene synthesis. Secondly, squalene is converted into lanosterol by the consecutive action of the squalene epoxidase erg1 and the lanosterol synthase erg7. Then, the delta(24)-sterol C-methyltransferase erg6 methylates lanosterol at C-24 to produce eburicol. Eburicol is the substrate of the sterol 14-alpha demethylase encoded by cyp51A and cyp51B, to yield 4,4,24-trimethyl ergosta-8,14,24(28)-trienol. The C-14 reductase erg24 then reduces the C14=C15 double bond which leads to 4,4-dimethylfecosterol. A sequence of further demethylations at C-4, involving the C-4 demethylation complex containing the C-4 methylsterol oxidases erg25A or erg25B, the sterol-4-alpha-carboxylate 3-dehydrogenase erg26 and the 3-keto-steroid reductase erg27, leads to the production of fecosterol via 4-methylfecosterol. The C-8 sterol isomerase erg2 then catalyzes the reaction which results in unsaturation at C-7 in the B ring of sterols and thus converts fecosterol to episterol. The sterol-C5-desaturase erg3B then catalyzes the introduction of a C-5 double bond in the B ring to produce 5-dehydroepisterol. The 2 other sterol-C5-desaturases, erg3A and erg3C, seem to be less important in ergosterol biosynthesis. The C-22 sterol desaturase erg5 further converts 5-dehydroepisterol into ergosta-5,7,22,24(28)-tetraen-3beta-ol by forming the C-22(23) double bond in the sterol side chain. Finally, ergosta-5,7,22,24(28)-tetraen-3beta-ol is substrate of the C-24(28) sterol reductases erg4A and erg4B to produce ergosterol. Possible alternative sterol biosynthetic pathways might exist from fecosterol to ergosterol, depending on the activities of the erg3 isoforms. This chain is Squalene epoxidase erg1, found in Aspergillus fumigatus (strain ATCC MYA-4609 / CBS 101355 / FGSC A1100 / Af293) (Neosartorya fumigata).